Consider the following 305-residue polypeptide: Acetaldehyde dehydrogenase (305 aa).

An NAD(+)-binding site is contributed by 13-16 (SGNI). The Acyl-thioester intermediate role is filled by cysteine 128. NAD(+) contacts are provided by residues 159–167 (SAGPGTRQN) and asparagine 278.

Belongs to the acetaldehyde dehydrogenase family.

The catalysed reaction is acetaldehyde + NAD(+) + CoA = acetyl-CoA + NADH + H(+). The protein is Acetaldehyde dehydrogenase of Chloroflexus aurantiacus (strain ATCC 29366 / DSM 635 / J-10-fl).